The sequence spans 409 residues: MIRSNPHYEKLRSSYLFSDIAKRVAAHQESHPGVDIIRLGIGDVTHALPDACVAAFHRGVDEMANDATFRGYGPEQGYAFLREKIASEDFKARGADIDSDEIFVSDGAKCDTGNFQELFSTDIRIAIPDPVYPVYLDTNVMAGRTGEFKDGRYGGVSYMDCTAENNFVPDLPQEQVDLIYLCFPNNPTGTTITKPELKRWVDYAHEAKALILFDAAYEAFIRDDTLPRSIYEIEGAKEVAVEFRSFSKTAGFTGTRCAYTVVPKACRVFDQKGAAIALHPLWNRRHTTKFNGVSYPVQRAAEAVYSTEGKAQVKALADGYLDNAGIIRRAMDTMGFDCVGGIDSPYVWINGNGRDSWAFFDLLLKKAGVVCTPGTGFGQCGEGYIRISAFNSREKVETAMARMKEALGS.

Substrate contacts are provided by Tyr15 and Gly42. Residues Tyr72, 108–109, Tyr132, Asn186, Tyr217, and 245–247 contribute to the pyridoxal 5'-phosphate site; these read AK and SFS. Substrate-binding residues include Lys109, Tyr132, and Asn186. N6-(pyridoxal phosphate)lysine is present on Lys248. Residues Arg256 and Asn291 each contribute to the pyridoxal 5'-phosphate site. Residues Asn291 and Arg386 each coordinate substrate.

Belongs to the class-I pyridoxal-phosphate-dependent aminotransferase family. LL-diaminopimelate aminotransferase subfamily. Homodimer. Pyridoxal 5'-phosphate serves as cofactor.

The enzyme catalyses (2S,6S)-2,6-diaminopimelate + 2-oxoglutarate = (S)-2,3,4,5-tetrahydrodipicolinate + L-glutamate + H2O + H(+). Its pathway is amino-acid biosynthesis; L-lysine biosynthesis via DAP pathway; LL-2,6-diaminopimelate from (S)-tetrahydrodipicolinate (aminotransferase route): step 1/1. In terms of biological role, involved in the synthesis of meso-diaminopimelate (m-DAP or DL-DAP), required for both lysine and peptidoglycan biosynthesis. Catalyzes the direct conversion of tetrahydrodipicolinate to LL-diaminopimelate. This chain is LL-diaminopimelate aminotransferase, found in Desulforapulum autotrophicum (strain ATCC 43914 / DSM 3382 / VKM B-1955 / HRM2) (Desulfobacterium autotrophicum).